The sequence spans 429 residues: Histidine--tRNA ligase (429 aa).

The protein belongs to the class-II aminoacyl-tRNA synthetase family. Homodimer.

It is found in the cytoplasm. The catalysed reaction is tRNA(His) + L-histidine + ATP = L-histidyl-tRNA(His) + AMP + diphosphate + H(+). In Escherichia fergusonii (strain ATCC 35469 / DSM 13698 / CCUG 18766 / IAM 14443 / JCM 21226 / LMG 7866 / NBRC 102419 / NCTC 12128 / CDC 0568-73), this protein is Histidine--tRNA ligase.